Consider the following 505-residue polypeptide: N-succinylglutamate 5-semialdehyde dehydrogenase (505 aa).

An NAD(+)-binding site is contributed by 234 to 239 (GSAHTG). Catalysis depends on residues E257 and C291.

The protein belongs to the aldehyde dehydrogenase family. AstD subfamily.

The enzyme catalyses N-succinyl-L-glutamate 5-semialdehyde + NAD(+) + H2O = N-succinyl-L-glutamate + NADH + 2 H(+). Its pathway is amino-acid degradation; L-arginine degradation via AST pathway; L-glutamate and succinate from L-arginine: step 4/5. Functionally, catalyzes the NAD-dependent reduction of succinylglutamate semialdehyde into succinylglutamate. The sequence is that of N-succinylglutamate 5-semialdehyde dehydrogenase from Yersinia pseudotuberculosis serotype IB (strain PB1/+).